Consider the following 426-residue polypeptide: Serine--tRNA ligase (426 aa).

233 to 235 (TAE) provides a ligand contact to L-serine. ATP is bound at residue 264–266 (RSE). Position 287 (Glu287) interacts with L-serine. 351-354 (EISS) is an ATP binding site. Ser387 is an L-serine binding site.

It belongs to the class-II aminoacyl-tRNA synthetase family. Type-1 seryl-tRNA synthetase subfamily. In terms of assembly, homodimer. The tRNA molecule binds across the dimer.

The protein localises to the cytoplasm. It catalyses the reaction tRNA(Ser) + L-serine + ATP = L-seryl-tRNA(Ser) + AMP + diphosphate + H(+). It carries out the reaction tRNA(Sec) + L-serine + ATP = L-seryl-tRNA(Sec) + AMP + diphosphate + H(+). The protein operates within aminoacyl-tRNA biosynthesis; selenocysteinyl-tRNA(Sec) biosynthesis; L-seryl-tRNA(Sec) from L-serine and tRNA(Sec): step 1/1. In terms of biological role, catalyzes the attachment of serine to tRNA(Ser). Is also able to aminoacylate tRNA(Sec) with serine, to form the misacylated tRNA L-seryl-tRNA(Sec), which will be further converted into selenocysteinyl-tRNA(Sec). This Pseudomonas aeruginosa (strain LESB58) protein is Serine--tRNA ligase.